A 276-amino-acid polypeptide reads, in one-letter code: Rhomboid protease GlpG (276 aa).

The next 6 membrane-spanning stretches (helical) occupy residues 94-114 (GPVTWVMMIACVVVFIAMQIL), 142-162 (ALMHFSLMHILFNLLWWWYLG), 169-189 (LGSGKLIVITLISALLSGYVQ), 192-212 (FSGPWFGGLSGVVYALMGYVW), 229-249 (LIIFALIWIVAGWFDLFGMSM), and 250-270 (ANGAHIAGLAVGLAMAFVDSL). The active-site Nucleophile is the serine 201. The active site involves histidine 254.

This sequence belongs to the peptidase S54 family.

It is found in the cell inner membrane. It catalyses the reaction Cleaves type-1 transmembrane domains using a catalytic dyad composed of serine and histidine that are contributed by different transmembrane domains.. Functionally, rhomboid-type serine protease that catalyzes intramembrane proteolysis. This chain is Rhomboid protease GlpG, found in Escherichia coli O157:H7.